Reading from the N-terminus, the 270-residue chain is Formamidopyrimidine-DNA glycosylase (270 aa).

Residue Pro2 is the Schiff-base intermediate with DNA of the active site. Catalysis depends on Glu3, which acts as the Proton donor. The active-site Proton donor; for beta-elimination activity is the Lys58. DNA contacts are provided by His91, Arg110, and Arg151. An FPG-type zinc finger spans residues 236-270 (FAYGRAGEFCKVCGTTLREVKLGQRASVYCPRCQR). Arg260 serves as the catalytic Proton donor; for delta-elimination activity.

Belongs to the FPG family. Monomer. Zn(2+) is required as a cofactor.

It catalyses the reaction Hydrolysis of DNA containing ring-opened 7-methylguanine residues, releasing 2,6-diamino-4-hydroxy-5-(N-methyl)formamidopyrimidine.. It carries out the reaction 2'-deoxyribonucleotide-(2'-deoxyribose 5'-phosphate)-2'-deoxyribonucleotide-DNA = a 3'-end 2'-deoxyribonucleotide-(2,3-dehydro-2,3-deoxyribose 5'-phosphate)-DNA + a 5'-end 5'-phospho-2'-deoxyribonucleoside-DNA + H(+). Involved in base excision repair of DNA damaged by oxidation or by mutagenic agents. Acts as a DNA glycosylase that recognizes and removes damaged bases. Has a preference for oxidized purines, such as 7,8-dihydro-8-oxoguanine (8-oxoG). Has AP (apurinic/apyrimidinic) lyase activity and introduces nicks in the DNA strand. Cleaves the DNA backbone by beta-delta elimination to generate a single-strand break at the site of the removed base with both 3'- and 5'-phosphates. The chain is Formamidopyrimidine-DNA glycosylase from Ectopseudomonas mendocina (strain ymp) (Pseudomonas mendocina).